A 186-amino-acid chain; its full sequence is MSANNGVTGKLSSRVMNMKFMKFGKTDDEESSNSNTPSNINSDVEPIEQKGKLFGLDDSAWDLNSYKDDLKKISGKEKKKVKRVVYKKRPNLIISNVGYSELRKPEGVISGRKTFGDNSDDSGSRKRKFDEGEQNEDEKRDAKDKEFTGSQDDGEDEYDLDKLFKDSIKKKKTNHNGKNKNRNSKK.

Ser-2 is modified (N-acetylserine). Disordered stretches follow at residues 22-47 (KFGK…VEPI) and 95-186 (SNVG…NSKK). Low complexity predominate over residues 32–42 (SNSNTPSNINS). Ser-42 is subject to Phosphoserine. Residues 122–147 (SGSRKRKFDEGEQNEDEKRDAKDKEF) show a composition bias toward basic and acidic residues. Ser-150 is subject to Phosphoserine. Basic residues predominate over residues 168-186 (IKKKKTNHNGKNKNRNSKK).

Belongs to the MPP6 family. Associates with the RNA exosome complex.

It is found in the nucleus. RNA-binding protein that associates with the RNA exosome complex. Involved in surveillance of pre-rRNAs and pre-mRNAs, and the degradation of cryptic non-coding RNAs (ncRNA) derived from intergenic regions and the ribosomal DNA spacer heterochromatin. In Saccharomyces cerevisiae (strain ATCC 204508 / S288c) (Baker's yeast), this protein is M-phase phosphoprotein 6 homolog (MPP6).